The primary structure comprises 177 residues: T-cell receptor beta chain C region (177 aa).

Residues 1-150 are c region; it reads EDLANVSAPQ…GVLSATVLYE (150 aa). N-linked (GlcNAc...) asparagine glycans are attached at residues N5 and N22. A disulfide bridge links C31 with C96. A helical membrane pass occupies residues 146–168; that stretch reads TVLYEILLGKATLYAVLVSALVL. At 169–177 the chain is on the cytoplasmic side; it reads MAMVKRKDS.

It localises to the membrane. The sequence is that of T-cell receptor beta chain C region from Oryctolagus cuniculus (Rabbit).